A 205-amino-acid polypeptide reads, in one-letter code: Nascent polypeptide-associated complex subunit alpha-like protein (205 aa).

2 disordered regions span residues 1 to 73 (MPSV…RKAM) and 137 to 166 (KAPN…DTGV). The segment covering 20-29 (EQQELEHSDE) has biased composition (basic and acidic residues). Positions 30 to 51 (PILEDDEDDDDEEDDNDEDDAQ) are enriched in acidic residues. The segment covering 56-66 (GEGKSKQSRSE) has biased composition (basic and acidic residues). Residues 63-128 (SRSEKKCRKA…AKIEDLSSQL (66 aa)) form the NAC-A/B domain. The segment covering 155–165 (QEDEDEVDDTG) has biased composition (acidic residues). A UBA domain is found at 166 to 203 (VEPKDIELVMTQAGVSRTKAVKALKAADGDIVSAIMDL).

Belongs to the NAC-alpha family.

May promote appropriate targeting of ribosome-nascent polypeptide complexes. The sequence is that of Nascent polypeptide-associated complex subunit alpha-like protein from Pinus taeda (Loblolly pine).